Reading from the N-terminus, the 471-residue chain is U1 small nuclear ribonucleoprotein 70 kDa (471 aa).

A disordered region spans residues 48–78 (FEDPRDAPPPTRAETREERMERKRREKIERR). Positions 60–78 (AETREERMERKRREKIERR) are enriched in basic and acidic residues. The tract at residues 92–202 (HNDQNAQGDA…GGGLGGTRRG (111 aa)) is required for interaction with U1 RNA. The region spanning 103-184 (KTLFVARVNY…LVDVERGRTV (82 aa)) is the RRM domain. The disordered stretch occupies residues 187 to 471 (WRPRRLGGGL…NGYMMEPPME (285 aa)). Residues 192 to 201 (LGGGLGGTRR) are compositionally biased toward gly residues. Positions 207–245 (NIRHSGRDDTSRYDERDRDRERERDRRERSRERDKERER) are enriched in basic and acidic residues. A compositionally biased stretch (basic residues) spans 246–259 (RRSRSRERRRRSRS). Residues 260 to 293 (REKEERKRSRERSRDKDKDKDKDKDKEKDKDKDR) show a composition bias toward basic and acidic residues. Residues 294 to 303 (DRKRRSRSRE) are compositionally biased toward basic residues. Basic and acidic residues-rich tracts occupy residues 304-321 (RKRE…RVEG) and 344-428 (IELK…ERVP).

Component of the U1 snRNP. The U1 snRNP is composed of the U1 snRNA and the 7 core Sm proteins snrpb, snrpd1, snrpd2, snrpd3, snrpe, snrpf and snrpg that assemble in a heptameric protein ring on the Sm site of the small nuclear RNA to form the core snRNP, and at least three U1 snRNP-specific proteins snrnp70/U1-70K, snrpa/U1-A and snrpc/U1-C.

The protein resides in the nucleus speckle. The protein localises to the nucleus. Its subcellular location is the nucleoplasm. Component of the spliceosomal U1 snRNP, which is essential for recognition of the pre-mRNA 5' splice-site and the subsequent assembly of the spliceosome. snrnp70 binds to the loop I region of U1-snRNA. The chain is U1 small nuclear ribonucleoprotein 70 kDa (snrnp70) from Xenopus tropicalis (Western clawed frog).